Reading from the N-terminus, the 306-residue chain is Ribonucleoside-diphosphate reductase small subunit (306 aa).

3 residues coordinate Fe cation: D66, E96, and H99. Y103 is a catalytic residue. A helical transmembrane segment spans residues 153 to 173 (ILMILIEGIFFVSSFAAIAYL). Positions 159, 193, and 196 each coordinate Fe cation.

It belongs to the ribonucleoside diphosphate reductase small chain family. Heterotetramer composed of a homodimer of the large subunit (R1) and a homodimer of the small subunit (R2). Larger multisubunit protein complex are also active, composed of (R1)n(R2)n. It depends on Fe cation as a cofactor.

Its subcellular location is the host membrane. The enzyme catalyses a 2'-deoxyribonucleoside 5'-diphosphate + [thioredoxin]-disulfide + H2O = a ribonucleoside 5'-diphosphate + [thioredoxin]-dithiol. Its function is as follows. Ribonucleoside-diphosphate reductase holoenzyme provides the precursors necessary for viral DNA synthesis. Allows virus growth in non-dividing cells, as well as reactivation from latency in infected hosts. Catalyzes the biosynthesis of deoxyribonucleotides from the corresponding ribonucleotides. This Varicella-zoster virus (strain Dumas) (HHV-3) protein is Ribonucleoside-diphosphate reductase small subunit.